The primary structure comprises 252 residues: 3-dehydroquinate dehydratase (252 aa).

3-dehydroquinate contacts are provided by residues S21, 46–48 (EWR), and R82. H143 (proton donor/acceptor) is an active-site residue. The active-site Schiff-base intermediate with substrate is K170. Positions 213, 232, and 236 each coordinate 3-dehydroquinate.

It belongs to the type-I 3-dehydroquinase family. In terms of assembly, homodimer.

The enzyme catalyses 3-dehydroquinate = 3-dehydroshikimate + H2O. The protein operates within metabolic intermediate biosynthesis; chorismate biosynthesis; chorismate from D-erythrose 4-phosphate and phosphoenolpyruvate: step 3/7. In terms of biological role, involved in the third step of the chorismate pathway, which leads to the biosynthesis of aromatic amino acids. Catalyzes the cis-dehydration of 3-dehydroquinate (DHQ) and introduces the first double bond of the aromatic ring to yield 3-dehydroshikimate. This Shigella boydii serotype 4 (strain Sb227) protein is 3-dehydroquinate dehydratase.